Reading from the N-terminus, the 449-residue chain is Required for meiotic nuclear division protein 1 homolog (449 aa).

The N-terminal 16 residues, 1–16 (MPATLLRAVAGSHRVL), are a transit peptide targeting the mitochondrion.

The protein belongs to the RMD1/sif2 family. As to quaternary structure, homooligomer.

The protein localises to the mitochondrion. Functionally, required for mitochondrial translation, possibly by coordinating the assembly or maintenance of the mitochondrial ribosome. This chain is Required for meiotic nuclear division protein 1 homolog (RMND1), found in Pongo abelii (Sumatran orangutan).